We begin with the raw amino-acid sequence, 102 residues long: YcgL domain-containing protein MS1047 (102 aa).

Positions 1–85 (MLCAIYKSKK…KQESLFEQFK (85 aa)) constitute a YcgL domain.

In Mannheimia succiniciproducens (strain KCTC 0769BP / MBEL55E), this protein is YcgL domain-containing protein MS1047.